We begin with the raw amino-acid sequence, 477 residues long: Cyclin-A1-2 (477 aa).

This sequence belongs to the cyclin family. Cyclin AB subfamily.

The chain is Cyclin-A1-2 (CYCA1-2) from Oryza sativa subsp. japonica (Rice).